The primary structure comprises 150 residues: MTTENRPAKIIEAHEIMTLLPHRYPFLLVDRVVDFEEGQWLKAYKNISVNEPCFTGHFPGQPILPGVLILEALAQSMGLLAFKTHEIKGGELFYFAGIDDARFKRPVLPGDRLELFVEVIKERRGITSFTGVASVDGEVACEAKLMCARR.

H57 is an active-site residue.

The protein belongs to the thioester dehydratase family. FabZ subfamily.

Its subcellular location is the cytoplasm. It carries out the reaction a (3R)-hydroxyacyl-[ACP] = a (2E)-enoyl-[ACP] + H2O. Involved in unsaturated fatty acids biosynthesis. Catalyzes the dehydration of short chain beta-hydroxyacyl-ACPs and long chain saturated and unsaturated beta-hydroxyacyl-ACPs. The sequence is that of 3-hydroxyacyl-[acyl-carrier-protein] dehydratase FabZ from Mannheimia succiniciproducens (strain KCTC 0769BP / MBEL55E).